A 202-amino-acid chain; its full sequence is MRANSPTQGISLKMHQARPLFLVTVALQLIGLGYSYQSEGDGAREVSNILSPVIPGTTLDRTLSNSSRKNDIPEGARLWDSLPDSSTLGESAVPVSRCCHNGGTCVLGSFCVCPAYFTGRYCEHDQRRRDCGALGHGAWTLHSCRLCRCIFSALYCLPHQTFSHCDLKSFLSSGARGSRECSIPSLLLLVLCLLLQGVAGKG.

Positions 1-35 (MRANSPTQGISLKMHQARPLFLVTVALQLIGLGYS) are cleaved as a signal peptide. Asparagine 65 is a glycosylation site (N-linked (GlcNAc...) asparagine). The 30-residue stretch at 94 to 123 (PVSRCCHNGGTCVLGSFCVCPAYFTGRYCE) folds into the EGF-like domain. Disulfide bonds link cysteine 98–cysteine 105, cysteine 99–cysteine 111, and cysteine 113–cysteine 122. Residue aspartate 166 is the site of GPI-anchor amidated aspartate attachment. Residues 167 to 202 (LKSFLSSGARGSRECSIPSLLLLVLCLLLQGVAGKG) constitute a propeptide, removed in mature form.

This sequence belongs to the EGF-CFC (Cripto-1/FRL1/Cryptic) family. In terms of processing, N-glycosylated. In terms of tissue distribution, no expressed in adult tissues.

It is found in the cell membrane. The protein resides in the secreted. Functionally, nodal coreceptor involved in the correct establishment of the left-right axis. May play a role in mesoderm and/or neural patterning during gastrulation. The chain is Cryptic protein (Cfc1) from Mus musculus (Mouse).